We begin with the raw amino-acid sequence, 171 residues long: Putative RING finger protein 027R (171 aa).

Residues 121-163 (CAVCMTNPVWVDFVWSCKHISTCIKCLKMLSRGSNGFKCPICR) form an RING-type zinc finger.

Belongs to the IIV-6 157L family.

This chain is Putative RING finger protein 027R, found in Aedes vexans (Inland floodwater mosquito).